The primary structure comprises 188 residues: ATP synthase subunit b (188 aa).

A helical transmembrane segment spans residues 24-44; the sequence is LPASYDIVWSLVVFIIVLILF.

It belongs to the ATPase B chain family. F-type ATPases have 2 components, F(1) - the catalytic core - and F(0) - the membrane proton channel. F(1) has five subunits: alpha(3), beta(3), gamma(1), delta(1), epsilon(1). F(0) has three main subunits: a(1), b(2) and c(10-14). The alpha and beta chains form an alternating ring which encloses part of the gamma chain. F(1) is attached to F(0) by a central stalk formed by the gamma and epsilon chains, while a peripheral stalk is formed by the delta and b chains.

It localises to the cell membrane. Its function is as follows. F(1)F(0) ATP synthase produces ATP from ADP in the presence of a proton or sodium gradient. F-type ATPases consist of two structural domains, F(1) containing the extramembraneous catalytic core and F(0) containing the membrane proton channel, linked together by a central stalk and a peripheral stalk. During catalysis, ATP synthesis in the catalytic domain of F(1) is coupled via a rotary mechanism of the central stalk subunits to proton translocation. In terms of biological role, component of the F(0) channel, it forms part of the peripheral stalk, linking F(1) to F(0). In Corynebacterium diphtheriae (strain ATCC 700971 / NCTC 13129 / Biotype gravis), this protein is ATP synthase subunit b.